Reading from the N-terminus, the 349-residue chain is Phosphoribosylformylglycinamidine cyclo-ligase (349 aa).

The protein belongs to the AIR synthase family.

It localises to the cytoplasm. It catalyses the reaction 2-formamido-N(1)-(5-O-phospho-beta-D-ribosyl)acetamidine + ATP = 5-amino-1-(5-phospho-beta-D-ribosyl)imidazole + ADP + phosphate + H(+). The protein operates within purine metabolism; IMP biosynthesis via de novo pathway; 5-amino-1-(5-phospho-D-ribosyl)imidazole from N(2)-formyl-N(1)-(5-phospho-D-ribosyl)glycinamide: step 2/2. This chain is Phosphoribosylformylglycinamidine cyclo-ligase, found in Bordetella petrii (strain ATCC BAA-461 / DSM 12804 / CCUG 43448).